The primary structure comprises 209 residues: Chloramphenicol acetyltransferase (209 aa).

His-189 (proton acceptor) is an active-site residue.

This sequence belongs to the chloramphenicol acetyltransferase family. In terms of assembly, homotrimer.

The catalysed reaction is chloramphenicol + acetyl-CoA = chloramphenicol 3-acetate + CoA. In terms of biological role, this enzyme is an effector of chloramphenicol resistance in bacteria. In Staphylococcus aureus, this protein is Chloramphenicol acetyltransferase.